We begin with the raw amino-acid sequence, 516 residues long: Na(+)/H(+) antiporter NhaB (516 aa).

Helical transmembrane passes span 23-43, 61-80, 97-117, 120-140, 144-164, 202-222, 238-258, 303-323, 348-368, 391-411, 447-467, and 475-495; these read LALI…PFVA, CYPL…IGMT, LLLM…LFVF, LLLG…AAAF, FLDA…FYGI, LMMH…VGEP, FFLR…LTCL, ALIG…VGLI, TEAL…AVII, LFYL…VGTV, ATPN…APLI, and VWMA…CVEF.

This sequence belongs to the NhaB Na(+)/H(+) (TC 2.A.34) antiporter family.

The protein localises to the cell inner membrane. It catalyses the reaction 2 Na(+)(in) + 3 H(+)(out) = 2 Na(+)(out) + 3 H(+)(in). In terms of biological role, na(+)/H(+) antiporter that extrudes sodium in exchange for external protons. In Klebsiella pneumoniae subsp. pneumoniae (strain ATCC 700721 / MGH 78578), this protein is Na(+)/H(+) antiporter NhaB.